The primary structure comprises 205 residues: Ribosomal RNA small subunit methyltransferase G (205 aa).

S-adenosyl-L-methionine is bound by residues Gly76, Leu81, 127–128, and Arg140; that span reads IE.

Belongs to the methyltransferase superfamily. RNA methyltransferase RsmG family.

The protein resides in the cytoplasm. The catalysed reaction is guanosine(527) in 16S rRNA + S-adenosyl-L-methionine = N(7)-methylguanosine(527) in 16S rRNA + S-adenosyl-L-homocysteine. Its function is as follows. Specifically methylates the N7 position of guanine in position 527 of 16S rRNA. This chain is Ribosomal RNA small subunit methyltransferase G, found in Francisella tularensis subsp. novicida (strain U112).